The sequence spans 480 residues: Probable glycosyltransferase At5g25310 (480 aa).

Topologically, residues 1–10 (MDKFQSKFTR) are cytoplasmic. Residues 11–31 (FGFISICFGSIALVLLISHCS) traverse the membrane as a helical; Signal-anchor for type II membrane protein segment. The Lumenal segment spans residues 32–480 (TSFFDYSFQK…WLRRLNLKLT (449 aa)). N-linked (GlcNAc...) asparagine glycans are attached at residues Asn85, Asn120, Asn243, Asn271, and Asn281.

This sequence belongs to the glycosyltransferase 47 family.

It is found in the golgi apparatus membrane. Its function is as follows. May be involved in cell wall biosynthesis. The protein is Probable glycosyltransferase At5g25310 of Arabidopsis thaliana (Mouse-ear cress).